Reading from the N-terminus, the 225-residue chain is Ribose-5-phosphate isomerase A (225 aa).

Residues 33-36 (TGST), 84-87 (DGAD), and 96-99 (KGGG) contribute to the substrate site. Glu-105 acts as the Proton acceptor in catalysis. Substrate is bound at residue Lys-123.

Belongs to the ribose 5-phosphate isomerase family. Homodimer.

It catalyses the reaction aldehydo-D-ribose 5-phosphate = D-ribulose 5-phosphate. The protein operates within carbohydrate degradation; pentose phosphate pathway; D-ribose 5-phosphate from D-ribulose 5-phosphate (non-oxidative stage): step 1/1. Functionally, catalyzes the reversible conversion of ribose-5-phosphate to ribulose 5-phosphate. The chain is Ribose-5-phosphate isomerase A from Halobacterium salinarum (strain ATCC 29341 / DSM 671 / R1).